We begin with the raw amino-acid sequence, 257 residues long: Ribosomal RNA small subunit methyltransferase J (257 aa).

Residues 109–110 (RD), 125–126 (ER), and aspartate 179 each bind S-adenosyl-L-methionine.

The protein belongs to the methyltransferase superfamily. RsmJ family.

The protein localises to the cytoplasm. The enzyme catalyses guanosine(1516) in 16S rRNA + S-adenosyl-L-methionine = N(2)-methylguanosine(1516) in 16S rRNA + S-adenosyl-L-homocysteine + H(+). In terms of biological role, specifically methylates the guanosine in position 1516 of 16S rRNA. The chain is Ribosomal RNA small subunit methyltransferase J from Actinobacillus succinogenes (strain ATCC 55618 / DSM 22257 / CCUG 43843 / 130Z).